The sequence spans 547 residues: Chaperonin GroEL (547 aa).

ATP contacts are provided by residues 30–33, lysine 51, 87–91, glycine 415, 479–481, and aspartate 495; these read TLGP, DGTTT, and NAA. The interval 524 to 547 is disordered; sequence APKKDEPTPPAAGGGMGGMGGMDF. A compositionally biased stretch (gly residues) spans 535–547; it reads AGGGMGGMGGMDF.

Belongs to the chaperonin (HSP60) family. Forms a cylinder of 14 subunits composed of two heptameric rings stacked back-to-back. Interacts with the co-chaperonin GroES.

It localises to the cytoplasm. It catalyses the reaction ATP + H2O + a folded polypeptide = ADP + phosphate + an unfolded polypeptide.. Functionally, together with its co-chaperonin GroES, plays an essential role in assisting protein folding. The GroEL-GroES system forms a nano-cage that allows encapsulation of the non-native substrate proteins and provides a physical environment optimized to promote and accelerate protein folding. The sequence is that of Chaperonin GroEL from Xylella fastidiosa (strain M23).